Reading from the N-terminus, the 224-residue chain is Histone H1.03 (224 aa).

2 stretches are compositionally biased toward low complexity: residues 1 to 22 (MAETAPVAAPDVAAAPTPAKAA) and 30 to 42 (AAGGAKARKPAGP). 2 disordered regions span residues 1–43 (MAET…AGPS) and 99–224 (QTKG…PKKK). The 74-residue stretch at 40–113 (AGPSVTELIT…GASGSFRLSK (74 aa)) folds into the H15 domain. 4 stretches are compositionally biased toward basic residues: residues 122–137 (APKKKTPAAKPKKPAA), 145–162 (KKPKKAVAVKKSPKKAKK), 170–188 (KAAKSPKKVTKAAKPKKAV), and 197–224 (KAVKPKAAKPKATKPKAAKAKKAAPKKK).

It belongs to the histone H1/H5 family.

The protein resides in the nucleus. The protein localises to the chromosome. Its function is as follows. Histones H1 are necessary for the condensation of nucleosome chains into higher-order structures. The protein is Histone H1.03 of Gallus gallus (Chicken).